A 183-amino-acid polypeptide reads, in one-letter code: MNLSAKTVVVIAIGAALYGIGGLPMFGIPVFANTTLKPAMAVLALFSVLYGPIVGFLVGFIGHWVTDLFAGWGVWLTWVLGSGIVGMIIGLFPIITKNRIESGLFDKKDFLIFVVLAFFGNVFGYGTSAFLDTILYAEPFTKVFMQLCIIAAGNTFLIAIVGYFILNNLAKRKKQSTNLTEAP.

5 helical membrane passes run 8–28 (VVVIAIGAALYGIGGLPMFGI), 41–61 (AVLALFSVLYGPIVGFLVGFI), 75–95 (WLTWVLGSGIVGMIIGLFPII), 110–130 (FLIFVVLAFFGNVFGYGTSAF), and 147–167 (LCIIAAGNTFLIAIVGYFILN).

It belongs to the UPF0397 family.

The protein localises to the cell membrane. This chain is UPF0397 protein VFMJ11_1662, found in Aliivibrio fischeri (strain MJ11) (Vibrio fischeri).